Consider the following 175-residue polypeptide: Photosynthetic NDH subunit of subcomplex B 4, chloroplastic (175 aa).

The N-terminal 24 residues, 1–24 (MAEAFTSFTFTNLHIPSSYNHSPK), are a transit peptide targeting the chloroplast. A helical transmembrane segment spans residues 95-111 (VYMFYIMFTCWGCLYFG).

In terms of assembly, part of the chloroplast NDH complex, composed of a mixture of chloroplast and nucleus encoded subunits. Component of the NDH subcomplex B, at least composed of PnsB1, PnsB2, PnsB3, PnsB4 and PnsB5.

Its subcellular location is the plastid. It is found in the chloroplast thylakoid membrane. In terms of biological role, NDH shuttles electrons from NAD(P)H:plastoquinone, via FMN and iron-sulfur (Fe-S) centers, to quinones in the photosynthetic chain and possibly in a chloroplast respiratory chain. The immediate electron acceptor for the enzyme in this species is believed to be plastoquinone. Couples the redox reaction to proton translocation, and thus conserves the redox energy in a proton gradient. The chain is Photosynthetic NDH subunit of subcomplex B 4, chloroplastic from Arabidopsis thaliana (Mouse-ear cress).